The primary structure comprises 76 residues: DNA gyrase inhibitor YacG (76 aa).

Zn(2+)-binding residues include Cys-7, Cys-10, Cys-26, and Cys-30.

This sequence belongs to the DNA gyrase inhibitor YacG family. In terms of assembly, interacts with GyrB. It depends on Zn(2+) as a cofactor.

Inhibits all the catalytic activities of DNA gyrase by preventing its interaction with DNA. Acts by binding directly to the C-terminal domain of GyrB, which probably disrupts DNA binding by the gyrase. The polypeptide is DNA gyrase inhibitor YacG (Pseudoalteromonas translucida (strain TAC 125)).